Consider the following 526-residue polypeptide: Lysine--tRNA ligase (526 aa).

Positions 431 and 438 each coordinate Mg(2+).

Belongs to the class-II aminoacyl-tRNA synthetase family. Homodimer. Mg(2+) is required as a cofactor.

It localises to the cytoplasm. The enzyme catalyses tRNA(Lys) + L-lysine + ATP = L-lysyl-tRNA(Lys) + AMP + diphosphate. The polypeptide is Lysine--tRNA ligase (lysS) (Chlamydia trachomatis serovar D (strain ATCC VR-885 / DSM 19411 / UW-3/Cx)).